Consider the following 441-residue polypeptide: Arginine biosynthesis bifunctional protein ArgJ, mitochondrial (441 aa).

The N-terminal 8 residues, 1-8 (MRISSTLL), are a transit peptide targeting the mitochondrion. Substrate is bound by residues Thr177, Lys204, Thr215, Glu301, Asn436, and Ser441. Residue Thr215 is the Nucleophile of the active site.

This sequence belongs to the ArgJ family. In terms of assembly, heterodimer of an alpha and a beta chain. The alpha and beta chains are autoproteolytically processed from a single precursor protein within the mitochondrion.

It localises to the mitochondrion matrix. The enzyme catalyses N(2)-acetyl-L-ornithine + L-glutamate = N-acetyl-L-glutamate + L-ornithine. It catalyses the reaction L-glutamate + acetyl-CoA = N-acetyl-L-glutamate + CoA + H(+). The protein operates within amino-acid biosynthesis; L-arginine biosynthesis; L-ornithine and N-acetyl-L-glutamate from L-glutamate and N(2)-acetyl-L-ornithine (cyclic): step 1/1. It participates in amino-acid biosynthesis; L-arginine biosynthesis; N(2)-acetyl-L-ornithine from L-glutamate: step 1/4. Its function is as follows. Catalyzes two activities which are involved in the cyclic version of arginine biosynthesis: the synthesis of acetylglutamate from glutamate and acetyl-CoA, and of ornithine by transacetylation between acetylornithine and glutamate. This is Arginine biosynthesis bifunctional protein ArgJ, mitochondrial from Saccharomyces cerevisiae (strain Lalvin EC1118 / Prise de mousse) (Baker's yeast).